Reading from the N-terminus, the 48-residue chain is GVACRCDSDGPTVRGDSLSGTLWLTGGCPSGWHNCRGSGPFIGYCCKK.

Intrachain disulfides connect Cys-4–Cys-45, Cys-6–Cys-35, and Cys-28–Cys-46.

Belongs to the sea anemone sodium channel inhibitory toxin family. Type I subfamily.

The protein localises to the secreted. It localises to the nematocyst. In terms of biological role, binds to the sodium channels Nav1.1/SCN1A (EC(50)=165 nM), Nav1.5/SCN5A (EC(50)=103 nM) and Nav1.6/SCN8A (EC(50)=133 nM), thereby delaying their inactivation. Also inhibits Nav1.2/SCN2A, Nav1.3/SCN3A, and Nav1.4/SCN4A, but to a lesser extent. Inhibits Nav1.5 differently from isoforms Nav1.1 and Nav1.6. In Nav1.5 the effect consists in a right-shift of inactivation; whereas in both Nav1.1 and Nav1.6 the effect consists in an incomplete inactivation. This is Delta-actitoxin-Bcg1b from Bunodosoma cangicum (Sea anemone).